Reading from the N-terminus, the 322-residue chain is Coelomocyte uptake defective protein 15 (322 aa).

The N-terminal stretch at 1–20 (MVNSLSRILFCSLLIFSVIS) is a signal peptide. Asparagine 62, asparagine 98, asparagine 144, asparagine 170, asparagine 180, asparagine 183, and asparagine 222 each carry an N-linked (GlcNAc...) asparagine glycan. The chain crosses the membrane as a helical span at residues 244-264 (LFGIMITFGTLLLLTALFYAA).

Belongs to the OSTM1 family.

The protein localises to the membrane. Functionally, modulates the transport of substances from the endosomal to lysosomal compartments. Plays a role in lysosome formation and function in coelomocytes. The sequence is that of Coelomocyte uptake defective protein 15 from Caenorhabditis elegans.